A 603-amino-acid chain; its full sequence is Adenine deaminase (603 aa).

Belongs to the metallo-dependent hydrolases superfamily. Adenine deaminase family. As to quaternary structure, homodimer. Mn(2+) serves as cofactor.

It catalyses the reaction adenine + H2O + H(+) = hypoxanthine + NH4(+). In Klebsiella pneumoniae (strain 342), this protein is Adenine deaminase.